Reading from the N-terminus, the 51-residue chain is uncharacterized protein (51 aa).

Residues 1–51 (MKRKAEVNEAIKNNNTPTESMDPNSYKTQYHDDPNFRGANRNSKQGQQGGM) are disordered. Polar residues-rich tracts occupy residues 11–28 (IKNN…SYKT) and 40–51 (NRNSKQGQQGGM).

This is an uncharacterized protein from Bacillus subtilis (strain 168).